The sequence spans 131 residues: Small ribosomal subunit protein uS8 (131 aa).

Belongs to the universal ribosomal protein uS8 family. Part of the 30S ribosomal subunit. Contacts proteins S5 and S12.

In terms of biological role, one of the primary rRNA binding proteins, it binds directly to 16S rRNA central domain where it helps coordinate assembly of the platform of the 30S subunit. This Blochmanniella pennsylvanica (strain BPEN) protein is Small ribosomal subunit protein uS8.